We begin with the raw amino-acid sequence, 255 residues long: Octanoyltransferase (255 aa).

One can recognise a BPL/LPL catalytic domain in the interval 54–238 (GDANELVWLL…SFTTIFGATV (185 aa)). Substrate-binding positions include 92 to 99 (RGGQLTYH), 167 to 169 (AIG), and 180 to 182 (GIA). The active-site Acyl-thioester intermediate is the Cys198.

Belongs to the LipB family.

Its subcellular location is the cytoplasm. It catalyses the reaction octanoyl-[ACP] + L-lysyl-[protein] = N(6)-octanoyl-L-lysyl-[protein] + holo-[ACP] + H(+). The protein operates within protein modification; protein lipoylation via endogenous pathway; protein N(6)-(lipoyl)lysine from octanoyl-[acyl-carrier-protein]: step 1/2. Its function is as follows. Catalyzes the transfer of endogenously produced octanoic acid from octanoyl-acyl-carrier-protein onto the lipoyl domains of lipoate-dependent enzymes. Lipoyl-ACP can also act as a substrate although octanoyl-ACP is likely to be the physiological substrate. In Rhodopseudomonas palustris (strain BisB5), this protein is Octanoyltransferase.